Here is a 170-residue protein sequence, read N- to C-terminus: Protein-lysine myristoyltransferase HlyC (170 aa).

Residues His-23 and Asp-92 contribute to the active site. His-151 serves as a coordination point for heme.

The protein belongs to the RTX toxin acyltransferase family. As to quaternary structure, monomer. Post-translationally, proteolytically cleaved by the protease systems ClpAP, ClpXP and FtsH, leading to its degradation.

The protein resides in the cytoplasm. The catalysed reaction is tetradecanoyl-[ACP] + L-lysyl-[protein] = N(6)-tetradecanoyl-L-lysyl-[protein] + holo-[ACP] + H(+). The acyltransferase activity is inhibited by heme. In terms of biological role, protein-lysine myristoyltransferase that catalyzes myristoylation of the protoxin (HlyA) at two internal lysine residues, thereby converting it to the active toxin. In Escherichia coli, this protein is Protein-lysine myristoyltransferase HlyC.